The sequence spans 389 residues: Alanine racemase 1 (389 aa).

Catalysis depends on Lys-41, which acts as the Proton acceptor; specific for D-alanine. The residue at position 41 (Lys-41) is an N6-(pyridoxal phosphate)lysine. Position 137 (Arg-137) interacts with substrate. Tyr-266 functions as the Proton acceptor; specific for L-alanine in the catalytic mechanism. Met-313 is a binding site for substrate.

This sequence belongs to the alanine racemase family. It depends on pyridoxal 5'-phosphate as a cofactor.

It catalyses the reaction L-alanine = D-alanine. It participates in amino-acid biosynthesis; D-alanine biosynthesis; D-alanine from L-alanine: step 1/1. Its function is as follows. Catalyzes the interconversion of L-alanine and D-alanine. May also act on other amino acids. In Bacillus subtilis (strain 168), this protein is Alanine racemase 1 (alr1).